A 294-amino-acid polypeptide reads, in one-letter code: Casein kinase II subunit beta (294 aa).

2 disordered regions span residues 66-90 and 269-294; these read DHNTDNTTTNTSNNNDSRNGTSKRN and KRMEEDDEEEEDEVEEEDDDRTMASE. A compositionally biased stretch (low complexity) spans 70 to 87; the sequence is DNTTTNTSNNNDSRNGTS. Residues 273–288 are compositionally biased toward acidic residues; that stretch reads EDDEEEEDEVEEEDDD.

It belongs to the casein kinase 2 subunit beta family. As to quaternary structure, tetramer composed of two alpha chains, one beta chain and one beta' chain. In terms of processing, phosphorylated by alpha subunit.

Its function is as follows. Regulatory subunit of casein kinase II/CK2. As part of the kinase complex regulates the basal catalytic activity of the alpha subunit a constitutively active serine/threonine-protein kinase that phosphorylates a large number of substrates containing acidic residues C-terminal to the phosphorylated serine or threonine. The polypeptide is Casein kinase II subunit beta (CKB1) (Candida albicans (Yeast)).